We begin with the raw amino-acid sequence, 265 residues long: Protein Pars_0096 (265 aa).

The protein belongs to the CinA family.

In Pyrobaculum arsenaticum (strain DSM 13514 / JCM 11321 / PZ6), this protein is Protein Pars_0096.